The following is a 283-amino-acid chain: Phosphatidylserine decarboxylase proenzyme (283 aa).

Active-site charge relay system; for autoendoproteolytic cleavage activity residues include D90, H143, and S248. Catalysis depends on S248, which acts as the Schiff-base intermediate with substrate; via pyruvic acid; for decarboxylase activity. A Pyruvic acid (Ser); by autocatalysis modification is found at S248.

The protein belongs to the phosphatidylserine decarboxylase family. PSD-B subfamily. Prokaryotic type I sub-subfamily. In terms of assembly, heterodimer of a large membrane-associated beta subunit and a small pyruvoyl-containing alpha subunit. The cofactor is pyruvate. Post-translationally, is synthesized initially as an inactive proenzyme. Formation of the active enzyme involves a self-maturation process in which the active site pyruvoyl group is generated from an internal serine residue via an autocatalytic post-translational modification. Two non-identical subunits are generated from the proenzyme in this reaction, and the pyruvate is formed at the N-terminus of the alpha chain, which is derived from the carboxyl end of the proenzyme. The autoendoproteolytic cleavage occurs by a canonical serine protease mechanism, in which the side chain hydroxyl group of the serine supplies its oxygen atom to form the C-terminus of the beta chain, while the remainder of the serine residue undergoes an oxidative deamination to produce ammonia and the pyruvoyl prosthetic group on the alpha chain. During this reaction, the Ser that is part of the protease active site of the proenzyme becomes the pyruvoyl prosthetic group, which constitutes an essential element of the active site of the mature decarboxylase.

The protein localises to the cell membrane. The catalysed reaction is a 1,2-diacyl-sn-glycero-3-phospho-L-serine + H(+) = a 1,2-diacyl-sn-glycero-3-phosphoethanolamine + CO2. The protein operates within phospholipid metabolism; phosphatidylethanolamine biosynthesis; phosphatidylethanolamine from CDP-diacylglycerol: step 2/2. Its function is as follows. Catalyzes the formation of phosphatidylethanolamine (PtdEtn) from phosphatidylserine (PtdSer). The sequence is that of Phosphatidylserine decarboxylase proenzyme from Francisella tularensis subsp. novicida (strain U112).